A 584-amino-acid chain; its full sequence is DNA ligase (584 aa).

Glutamate 249 lines the ATP pocket. Lysine 251 functions as the N6-AMP-lysine intermediate in the catalytic mechanism. Arginine 256, arginine 271, glutamate 301, phenylalanine 341, arginine 416, and lysine 422 together coordinate ATP.

It belongs to the ATP-dependent DNA ligase family. It depends on Mg(2+) as a cofactor.

The catalysed reaction is ATP + (deoxyribonucleotide)n-3'-hydroxyl + 5'-phospho-(deoxyribonucleotide)m = (deoxyribonucleotide)n+m + AMP + diphosphate.. Its function is as follows. DNA ligase that seals nicks in double-stranded DNA during DNA replication, DNA recombination and DNA repair. The protein is DNA ligase of Pyrobaculum islandicum (strain DSM 4184 / JCM 9189 / GEO3).